The primary structure comprises 538 residues: 2-isopropylmalate synthase (538 aa).

Residues 6 to 277 (LIIFDTTLRD…DSTVPLSTID (272 aa)) form the Pyruvate carboxyltransferase domain. Residues D15, H206, H208, and N242 each coordinate Mn(2+). Residues 406-538 (RLEQVQVSCG…AHPDAAAQKL (133 aa)) form a regulatory domain region.

Belongs to the alpha-IPM synthase/homocitrate synthase family. LeuA type 1 subfamily. In terms of assembly, homodimer. Requires Mn(2+) as cofactor.

Its subcellular location is the cytoplasm. It catalyses the reaction 3-methyl-2-oxobutanoate + acetyl-CoA + H2O = (2S)-2-isopropylmalate + CoA + H(+). It participates in amino-acid biosynthesis; L-leucine biosynthesis; L-leucine from 3-methyl-2-oxobutanoate: step 1/4. Functionally, catalyzes the condensation of the acetyl group of acetyl-CoA with 3-methyl-2-oxobutanoate (2-ketoisovalerate) to form 3-carboxy-3-hydroxy-4-methylpentanoate (2-isopropylmalate). This Gloeobacter violaceus (strain ATCC 29082 / PCC 7421) protein is 2-isopropylmalate synthase.